The primary structure comprises 528 residues: Bifunctional purine biosynthesis protein PurH (528 aa).

In terms of domain architecture, MGS-like spans 1 to 146 (MAPTALLSVS…KNHDHVAVLT (146 aa)).

Belongs to the PurH family.

It carries out the reaction (6R)-10-formyltetrahydrofolate + 5-amino-1-(5-phospho-beta-D-ribosyl)imidazole-4-carboxamide = 5-formamido-1-(5-phospho-D-ribosyl)imidazole-4-carboxamide + (6S)-5,6,7,8-tetrahydrofolate. It catalyses the reaction IMP + H2O = 5-formamido-1-(5-phospho-D-ribosyl)imidazole-4-carboxamide. It functions in the pathway purine metabolism; IMP biosynthesis via de novo pathway; 5-formamido-1-(5-phospho-D-ribosyl)imidazole-4-carboxamide from 5-amino-1-(5-phospho-D-ribosyl)imidazole-4-carboxamide (10-formyl THF route): step 1/1. It participates in purine metabolism; IMP biosynthesis via de novo pathway; IMP from 5-formamido-1-(5-phospho-D-ribosyl)imidazole-4-carboxamide: step 1/1. The chain is Bifunctional purine biosynthesis protein PurH from Synechococcus sp. (strain WH7803).